Here is a 779-residue protein sequence, read N- to C-terminus: MVYTPSKGPRTLYDKVFDAHVVHQDENGSFLLYIDRHLVHEVTSPQAFEGLENAGRKVRRVDCTLATVDHNIPTESRKNFKSLDTFIKQTDSRLQVKTLENNVKQFGVPYFGMSDARQGIVHTIGPEEGFTLPGTTVVCGDSHTSTHGAFGSLAFGIGTSEVEHVLATQTIIQAKSKNMRITVNGKLSPGITSKDLILYIIGLIGTAGGTGCVIEFAGEAIEALSMEARMSMCNMAIEAGARAGMIKPDETTFQYTKGRPLAPKGAEWEKAVAYWKTLKTDEGAKFDHEINIEAVDVIPTITWGTSPQDALPITGSVPDPKNVTDPIKKSGMERALAYMGLEPNTPLKSIKVDKVFIGSCTNGRIEDLRSAAAVVRGQKLASNIKLAMVVPGSGLVKKQAEAEGLDKIFQEAGFEWREAGCSICLGMNPDILDAYERCASTSNRNFEGRQGALSRTHLMSPAMAAAAGIAGHFVDIREFEYKDQDQSSPKVEVTSEDEKELESAAYDHAEPVQPEDAPQDIANDELKDIPVKSDDTPAKPSSSGMKPFLTLEGISAPLDKANVDTDAIIPKQFLKTIKRTGLKKGLFYEWRFRKDDQGKDQETDFVLNVEPWREAEILVVTGDNFGCGSSREHAPWALKDFGIKSIIAPSYGDIFYNNSFKNGLLPIRLDQQIIIDKLIPIANKGGKLCVDLPNQKILDSDGNVLVDHFEIEPFRKHCLVNGLDDIGITLQKEEYISRYEALRREKYSFLEGGSKLLKFDNVPKRKAVTTTFDKVHQDW.

Positions 360, 421, and 424 each coordinate [4Fe-4S] cluster. A disordered region spans residues 484–518 (QDQSSPKVEVTSEDEKELESAAYDHAEPVQPEDAP). Ser488 is subject to Phosphoserine. At Thr494 the chain carries Phosphothreonine. Position 495 is a phosphoserine (Ser495). The segment covering 501-510 (LESAAYDHAE) has biased composition (basic and acidic residues).

This sequence belongs to the aconitase/IPM isomerase family. In terms of assembly, monomer. [4Fe-4S] cluster is required as a cofactor.

It carries out the reaction (2R,3S)-3-isopropylmalate = (2S)-2-isopropylmalate. It participates in amino-acid biosynthesis; L-leucine biosynthesis; L-leucine from 3-methyl-2-oxobutanoate: step 2/4. Catalyzes the isomerization between 2-isopropylmalate and 3-isopropylmalate, via the formation of 2-isopropylmaleate. This chain is 3-isopropylmalate dehydratase (LEU1), found in Saccharomyces cerevisiae (strain ATCC 204508 / S288c) (Baker's yeast).